The primary structure comprises 254 residues: 5'-nucleotidase SurE (254 aa).

Residues aspartate 8, aspartate 9, serine 40, and asparagine 93 each contribute to the a divalent metal cation site.

The protein belongs to the SurE nucleotidase family. Requires a divalent metal cation as cofactor.

Its subcellular location is the cytoplasm. The enzyme catalyses a ribonucleoside 5'-phosphate + H2O = a ribonucleoside + phosphate. Nucleotidase that shows phosphatase activity on nucleoside 5'-monophosphates. This chain is 5'-nucleotidase SurE, found in Actinobacillus pleuropneumoniae serotype 5b (strain L20).